Reading from the N-terminus, the 507-residue chain is Interleukin-17 receptor E-like protein (507 aa).

A signal peptide spans Met1–Ala21.

The protein resides in the secreted. This Homo sapiens (Human) protein is Interleukin-17 receptor E-like protein.